A 344-amino-acid chain; its full sequence is Cycloartenol-C-24-methyltransferase 1 (344 aa).

The protein belongs to the class I-like SAM-binding methyltransferase superfamily. Erg6/SMT family.

The enzyme catalyses zymosterol + S-adenosyl-L-methionine = fecosterol + S-adenosyl-L-homocysteine + H(+). It participates in steroid biosynthesis; sterol biosynthesis. Its function is as follows. Catalyzes the methyl transfer from S-adenosyl-methionine to the C-24 of cycloartenol to form 24-methylene cycloartenol. The protein is Cycloartenol-C-24-methyltransferase 1 (Smt1-1) of Oryza sativa subsp. japonica (Rice).